The sequence spans 152 residues: SsrA-binding protein (152 aa).

It belongs to the SmpB family.

It is found in the cytoplasm. Its function is as follows. Required for rescue of stalled ribosomes mediated by trans-translation. Binds to transfer-messenger RNA (tmRNA), required for stable association of tmRNA with ribosomes. tmRNA and SmpB together mimic tRNA shape, replacing the anticodon stem-loop with SmpB. tmRNA is encoded by the ssrA gene; the 2 termini fold to resemble tRNA(Ala) and it encodes a 'tag peptide', a short internal open reading frame. During trans-translation Ala-aminoacylated tmRNA acts like a tRNA, entering the A-site of stalled ribosomes, displacing the stalled mRNA. The ribosome then switches to translate the ORF on the tmRNA; the nascent peptide is terminated with the 'tag peptide' encoded by the tmRNA and targeted for degradation. The ribosome is freed to recommence translation, which seems to be the essential function of trans-translation. The polypeptide is SsrA-binding protein (Persephonella marina (strain DSM 14350 / EX-H1)).